The sequence spans 605 residues: DNA primase (605 aa).

The segment at 37-61 adopts a CHC2-type zinc-finger fold; it reads CPFHADKNPSMHINPIKGFYHCFAC. Positions 248 to 329 constitute a Toprim domain; it reads KEIIVCEGYM…DGKVAILQGG (82 aa). Positions 254, 298, and 300 each coordinate Mg(2+).

The protein belongs to the DnaG primase family. Monomer. Interacts with DnaB. Zn(2+) serves as cofactor. The cofactor is Mg(2+).

The catalysed reaction is ssDNA + n NTP = ssDNA/pppN(pN)n-1 hybrid + (n-1) diphosphate.. Functionally, RNA polymerase that catalyzes the synthesis of short RNA molecules used as primers for DNA polymerase during DNA replication. This is DNA primase from Campylobacter jejuni subsp. jejuni serotype O:2 (strain ATCC 700819 / NCTC 11168).